Consider the following 454-residue polypeptide: MTTSKRHYHITTFGCQMNKADSERMAGVLEDMGFEWSEDPNNADVILYNTCTIRDNAEQKVYSYLGRQAKRKHDQPDLTLIVAGCVAQQEGEALLRRVPELDLVMGPQHANRLKDLLESVFDGNQVVATESVHIIEDITQPRRDSKVTAWVNVIYGCNERCTYCVVPNVRGIEQSRTPSAIRAEMEELGRQGYKEITLLGQNIDAYGRDLPGTTPEGRHLHNFTDLLYYVHDVPGIERLRFATSHPRYFTERLIKACAELPKVCKHFHIPFQSGDNELLKAMARGYTHEKYRRIIDTIRRYMPDASISADAIVGFPGETEAQFENTLKLVEDIGFDMLNTAAYSPRPGTPAALWDNQLSEEVKSDRLQRLNHLGNLKVAERSQRYFGRIEEVLVEDQNPKDQTQVMGRTDGNRLTFFSGDIKELKGQLVKVKITEVRPFSLTGQPVEVRQAIPV.

Residues 6–122 (RHYHITTFGC…LKDLLESVFD (117 aa)) form the MTTase N-terminal domain. Cysteine 15, cysteine 51, cysteine 85, cysteine 157, cysteine 161, and cysteine 164 together coordinate [4Fe-4S] cluster. The region spanning 143 to 381 (RDSKVTAWVN…HLGNLKVAER (239 aa)) is the Radical SAM core domain. In terms of domain architecture, TRAM spans 383–447 (QRYFGRIEEV…PFSLTGQPVE (65 aa)).

Belongs to the methylthiotransferase family. MiaB subfamily. As to quaternary structure, monomer. [4Fe-4S] cluster is required as a cofactor.

The protein localises to the cytoplasm. The catalysed reaction is N(6)-dimethylallyladenosine(37) in tRNA + (sulfur carrier)-SH + AH2 + 2 S-adenosyl-L-methionine = 2-methylsulfanyl-N(6)-dimethylallyladenosine(37) in tRNA + (sulfur carrier)-H + 5'-deoxyadenosine + L-methionine + A + S-adenosyl-L-homocysteine + 2 H(+). In terms of biological role, catalyzes the methylthiolation of N6-(dimethylallyl)adenosine (i(6)A), leading to the formation of 2-methylthio-N6-(dimethylallyl)adenosine (ms(2)i(6)A) at position 37 in tRNAs that read codons beginning with uridine. This is tRNA-2-methylthio-N(6)-dimethylallyladenosine synthase from Nostoc punctiforme (strain ATCC 29133 / PCC 73102).